We begin with the raw amino-acid sequence, 272 residues long: NH(3)-dependent NAD(+) synthetase (272 aa).

45-52 (GISGGQDS) provides a ligand contact to ATP. Asp51 is a Mg(2+) binding site. Arg138 contacts deamido-NAD(+). Residue Thr158 coordinates ATP. Glu163 lines the Mg(2+) pocket. Residues Lys171 and Asp178 each coordinate deamido-NAD(+). Positions 187 and 209 each coordinate ATP. Residue 258–259 (HK) participates in deamido-NAD(+) binding.

Belongs to the NAD synthetase family. Homodimer.

The enzyme catalyses deamido-NAD(+) + NH4(+) + ATP = AMP + diphosphate + NAD(+) + H(+). It participates in cofactor biosynthesis; NAD(+) biosynthesis; NAD(+) from deamido-NAD(+) (ammonia route): step 1/1. Catalyzes the ATP-dependent amidation of deamido-NAD to form NAD. Uses ammonia as a nitrogen source. In Bacillus thuringiensis subsp. konkukian (strain 97-27), this protein is NH(3)-dependent NAD(+) synthetase.